The chain runs to 296 residues: GTPase Era (296 aa).

The Era-type G domain occupies 7–174 (KAGYISIVGR…TEVIRHYLPE (168 aa)). The interval 15–22 (GRPNVGKS) is G1. 15 to 22 (GRPNVGKS) provides a ligand contact to GTP. The segment at 41–45 (QTTRH) is G2. A G3 region spans residues 62–65 (DTPG). Residues 62–66 (DTPGF) and 123–126 (NKID) contribute to the GTP site. The interval 123–126 (NKID) is G4. Residues 153 to 155 (VSA) form a G5 region. Residues 205-281 (IGEEVPYSVS…YLEIWVKVKS (77 aa)) enclose the KH type-2 domain.

This sequence belongs to the TRAFAC class TrmE-Era-EngA-EngB-Septin-like GTPase superfamily. Era GTPase family. In terms of assembly, monomer.

The protein resides in the cytoplasm. Its subcellular location is the cell inner membrane. Functionally, an essential GTPase that binds both GDP and GTP, with rapid nucleotide exchange. Plays a role in 16S rRNA processing and 30S ribosomal subunit biogenesis and possibly also in cell cycle regulation and energy metabolism. This chain is GTPase Era, found in Nitrosomonas eutropha (strain DSM 101675 / C91 / Nm57).